The sequence spans 395 residues: Major outer membrane porin, serovar F (395 aa).

An N-terminal signal peptide occupies residues 1 to 22; sequence MKKLLKSVLVFAALSSASSLQA.

Belongs to the chlamydial porin (CP) (TC 1.B.2) family. As to quaternary structure, part of a disulfide cross-linked outer membrane complex (COMC) composed of the major outer membrane porin (MOMP), the small cysteine-rich protein (OmcA) and the large cysteine-rich periplasmic protein (OmcB).

It localises to the cell outer membrane. In elementary bodies (EBs, the infectious stage, which is able to survive outside the host cell) provides the structural integrity of the outer envelope through disulfide cross-links with the small cysteine-rich protein and the large cysteine-rich periplasmic protein. It has been described in publications as the Sarkosyl-insoluble COMC (Chlamydia outer membrane complex), and serves as the functional equivalent of peptidoglycan. In terms of biological role, permits diffusion of specific solutes through the outer membrane. The sequence is that of Major outer membrane porin, serovar F (ompA) from Chlamydia trachomatis.